The chain runs to 313 residues: MNELPGSYKLKIKKAATGSIQFSRYLLTRMTHDRVNVNAGYLAYITLLSIVPMLTVLLSILSSFSVFADVGLVIQNFVITNFVPASGDAVHGALLEFVANTGKMTAVGSVFLFIAALMLISNIDKNLNYIWRVTEKRRAVLSFSMYWMVLTLGPILIGASIAATSYVTSLNLLQNEVVSSAFNTVIRKLPLITSFFAFFGLYLLVPNKKIHFSHAAAGSLVAALLFELSKKGFAAYITQFPSYQLIYGALAAIPILFVWVYLCWLIVLVGAEVTAALGEQEQWSDSQEMVHSSDKDKITEQGNNSDSTDPESK.

6 helical membrane-spanning segments follow: residues 41-61 (YLAY…LSIL), 104-124 (MTAV…SNID), 139-159 (AVLS…LIGA), 185-205 (VIRK…YLLV), 217-237 (AGSL…AAYI), and 249-269 (ALAA…IVLV). The segment covering 281–290 (EQWSDSQEMV) has biased composition (polar residues). The segment at 281 to 313 (EQWSDSQEMVHSSDKDKITEQGNNSDSTDPESK) is disordered.

The protein belongs to the UPF0761 family.

Its subcellular location is the cell inner membrane. The sequence is that of UPF0761 membrane protein VS_0126 from Vibrio atlanticus (strain LGP32) (Vibrio splendidus (strain Mel32)).